We begin with the raw amino-acid sequence, 399 residues long: Integral membrane protein GPR137B (399 aa).

Positions 1–22 (MRPERPRPRGSAPGPMETPPWD) are disordered. Residues 1 to 46 (MRPERPRPRGSAPGPMETPPWDPARNDSLPPTLTPAVPPYVKLGLT) are Lumenal-facing. A glycan (N-linked (GlcNAc...) asparagine) is linked at Asn26. Residues 47-67 (VVYTVFYALLFVFIYVQLWLV) form a helical membrane-spanning segment. At 68–79 (LRYRHKRLSYQS) the chain is on the cytoplasmic side. Residues 80-100 (VFLFLCLFWASLRTVLFSFYF) traverse the membrane as a helical segment. Over 101 to 111 (KDFVAANSLSP) the chain is Lumenal. The helical transmembrane segment at 112–132 (FVFWLLYCFPVCLQFFTLTLM) threads the bilayer. The Cytoplasmic segment spans residues 133 to 159 (NLYFTQVIFKAKSKYSPELLKYRLPLY). The helical transmembrane segment at 160-180 (LASLFISLVFLLVNLTCAVLV) threads the bilayer. The Lumenal segment spans residues 181–188 (KTGNWERK). Residues 189 to 209 (VIVSVRVAINDTLFVLCAVSL) form a helical membrane-spanning segment. The Cytoplasmic portion of the chain corresponds to 210–237 (SICLYKISKMSLANIYLESKGSSVCQVT). Residues 238–258 (AIGVTVILLYTSRACYNLFIL) traverse the membrane as a helical segment. Over 259-292 (SFSQNKSVHSFDYDWYNVSDQADLKNQLGDAGYV) the chain is Lumenal. N-linked (GlcNAc...) asparagine glycosylation is found at Asn263 and Asn275. A helical transmembrane segment spans residues 293 to 313 (LFGVVLFVWELLPTTLVVYFF). The Cytoplasmic segment spans residues 314 to 399 (RVRNPTKDLT…TLDPDKPSLG (86 aa)).

The protein belongs to the GPR137 family. As to quaternary structure, interaction with RRAGA; increases RRAGA recruitment to lysosomes. Interacts with MTOR; this interaction is amino acid sensitive. Expressed in kidney, heart, brain and placenta.

It is found in the lysosome membrane. In terms of biological role, lysosomal integral membrane protein that regulates the localization and activity of mTORC1, a signaling complex promoting cell growth in response to growth factors, energy levels, and amino acids. Interacts with Rag GTPases and increases the lysosomial localization and activity of Rag GTPases and thereby regulates mTORC1 translocation and activity in lysosome. Involved in the regulation of lysosomal morphology and autophagy. Also acts as a negative regulator of osteoclast activity. Involved in interleukin-4-induced M2 macrophage polarization. The protein is Integral membrane protein GPR137B (GPR137B) of Homo sapiens (Human).